Consider the following 162-residue polypeptide: Large ribosomal subunit protein uL22c (162 aa).

The protein belongs to the universal ribosomal protein uL22 family. Part of the 50S ribosomal subunit.

It is found in the plastid. The protein resides in the chloroplast. Functionally, this protein binds specifically to 23S rRNA. The globular domain of the protein is located near the polypeptide exit tunnel on the outside of the subunit, while an extended beta-hairpin is found that lines the wall of the exit tunnel in the center of the 70S ribosome. The protein is Large ribosomal subunit protein uL22c (rpl22) of Cucumis sativus (Cucumber).